Consider the following 403-residue polypeptide: Dual-specificity RNA methyltransferase RlmN (403 aa).

Glu-126 acts as the Proton acceptor in catalysis. A Radical SAM core domain is found at 132–375; sequence ETDRGTLCVS…VRTPRGRDIL (244 aa). An intrachain disulfide couples Cys-139 to Cys-378. Cys-146, Cys-150, and Cys-153 together coordinate [4Fe-4S] cluster. Residues 204–205, Ser-236, 258–260, and Asn-335 contribute to the S-adenosyl-L-methionine site; these read GE and SLH. Cys-378 serves as the catalytic S-methylcysteine intermediate.

This sequence belongs to the radical SAM superfamily. RlmN family. Requires [4Fe-4S] cluster as cofactor.

It localises to the cytoplasm. The enzyme catalyses adenosine(2503) in 23S rRNA + 2 reduced [2Fe-2S]-[ferredoxin] + 2 S-adenosyl-L-methionine = 2-methyladenosine(2503) in 23S rRNA + 5'-deoxyadenosine + L-methionine + 2 oxidized [2Fe-2S]-[ferredoxin] + S-adenosyl-L-homocysteine. The catalysed reaction is adenosine(37) in tRNA + 2 reduced [2Fe-2S]-[ferredoxin] + 2 S-adenosyl-L-methionine = 2-methyladenosine(37) in tRNA + 5'-deoxyadenosine + L-methionine + 2 oxidized [2Fe-2S]-[ferredoxin] + S-adenosyl-L-homocysteine. In terms of biological role, specifically methylates position 2 of adenine 2503 in 23S rRNA and position 2 of adenine 37 in tRNAs. m2A2503 modification seems to play a crucial role in the proofreading step occurring at the peptidyl transferase center and thus would serve to optimize ribosomal fidelity. The sequence is that of Dual-specificity RNA methyltransferase RlmN from Bradyrhizobium sp. (strain BTAi1 / ATCC BAA-1182).